A 122-amino-acid chain; its full sequence is Small ribosomal subunit protein uS13 (122 aa).

The tract at residues 98–122 is disordered; sequence VRGQRTHTNARTRKGPAKAIAGKKK.

It belongs to the universal ribosomal protein uS13 family. As to quaternary structure, part of the 30S ribosomal subunit. Forms a loose heterodimer with protein S19. Forms two bridges to the 50S subunit in the 70S ribosome.

Functionally, located at the top of the head of the 30S subunit, it contacts several helices of the 16S rRNA. In the 70S ribosome it contacts the 23S rRNA (bridge B1a) and protein L5 of the 50S subunit (bridge B1b), connecting the 2 subunits; these bridges are implicated in subunit movement. Contacts the tRNAs in the A and P-sites. The polypeptide is Small ribosomal subunit protein uS13 (Roseobacter denitrificans (strain ATCC 33942 / OCh 114) (Erythrobacter sp. (strain OCh 114))).